A 584-amino-acid chain; its full sequence is Insulin-like growth factor 2 mRNA-binding protein 3 (584 aa).

2 RRM domains span residues 2-75 and 81-156; these read NKLY…HSVP and RKLQ…YIPD. Positions 160–199 are disordered; it reads AQQPPQQHPQGRRGFGQRGPPRQGSPSATTRQKPQSDVPL. Positions 184–194 are enriched in polar residues; sequence SPSATTRQKPQ. KH domains are found at residues 196–261, 277–344, 409–474, and 491–557; these read DVPL…CKII, EIPL…EEEI, SETV…QGRI, and KLEA…QRKI.

Belongs to the RRM IMP/VICKZ family. In terms of assembly, homodimer and multimer.

Its subcellular location is the cytoplasm. It localises to the nucleus. The protein resides in the P-body. It is found in the stress granule. In terms of biological role, RNA-binding factor that may recruit target transcripts to cytoplasmic protein-RNA complexes (mRNPs). This transcript 'caging' into mRNPs allows mRNA transport and transient storage. It also modulates the rate and location at which target transcripts encounter the translational apparatus and shields them from endonuclease attacks or microRNA-mediated degradation. Preferentially binds to N6-methyladenosine (m6A)-containing mRNAs and increases their stability. The polypeptide is Insulin-like growth factor 2 mRNA-binding protein 3 (IGF2BP3) (Gallus gallus (Chicken)).